Here is a 485-residue protein sequence, read N- to C-terminus: uncharacterized protein (485 aa).

The first 23 residues, 1-23, serve as a signal peptide directing secretion; that stretch reads MRRRVCTVVRAVVCLLSTSLLTT. C24 carries the N-palmitoyl cysteine lipid modification. C24 is lipidated: S-diacylglycerol cysteine. Over residues 308–327 the composition is skewed to low complexity; that stretch reads SAASSPAQCPSSPSSSSSSS. The interval 308-331 is disordered; the sequence is SAASSPAQCPSSPSSSSSSSTNAG.

This sequence belongs to the TP013X lipoprotein family.

The protein resides in the cell membrane. This is an uncharacterized protein from Treponema pallidum (strain Nichols).